The following is a 76-amino-acid chain: Brevinin-2ISa (76 aa).

A signal peptide spans 1–22 (MFNMKKSLLLLFFLGTISLSLC). Positions 23–41 (EEERDADEDDGVEMTEEEV) are cleaved as a propeptide — removed in mature form. Residues Cys70 and Cys76 are joined by a disulfide bond.

In terms of tissue distribution, expressed by the skin glands.

The protein localises to the secreted. Functionally, has antimicrobial activity against Gram-negative bacterium E.coli ATCC 8739 (MIC=50 ug), against Gram positive bacteria S.aureus ATCC 6538 (MIC=12.5 ug), methicillin-resistant S.aureus ATCC 43300 (MIC=100 ug) and B.subtilis ATCC 6633 (MIC=12.5 ug). Has no activity against fungus C.albicans ATCC 90028. This is Brevinin-2ISa from Odorrana ishikawae (Ishikawa's frog).